The following is a 484-amino-acid chain: MSDRIRVRYAPSPTGYLHIGNARTALFNYLYAKHYNGDFVIRIEDTDKKRNLEDGETSQFDNLKWLGLDWDESVDKDNGYGPYRQSERQHIYQPLIDQLLAEDKAYKCYMTEEELEAEREAQIARGEMPRYGGQHAHLTEEQRQQFEAEGRQPSIRFRVPQNQTYSFDDMVKGNISFDSNGIGDWVIVKKDGIPTYNFAVAIDDHYMEISDVIRGDDHISNTPKQIMIYEAFGWEPPRFGHMSLIVNEERKKLSKRDGQILQFIEQYRDLGYLPEALFNFIALLGWSPEGEEEIFSKEEFIKIFDEKRLSKSPAFFDKQKLAWVNNQYMKQKDTETVFQLALPHLIKANLIPEVPSEEDLSWGRKLIALYQKEMSYAGEIVPLSEMFFKEMPALGEEEQQVINGEQVPELMTHLFSKLEALEPFEAAEIKKTIKEVQKETGIKGKQLFMPIRVAVTGQMHGPELPNTIEVLGKEKVLNRLKQYK.

A 'HIGH' region motif is present at residues 11 to 21 (PSPTGYLHIGN). A 'KMSKS' region motif is present at residues 252–256 (KLSKR). Lys-255 serves as a coordination point for ATP.

This sequence belongs to the class-I aminoacyl-tRNA synthetase family. Glutamate--tRNA ligase type 1 subfamily. Monomer.

It localises to the cytoplasm. It catalyses the reaction tRNA(Glu) + L-glutamate + ATP = L-glutamyl-tRNA(Glu) + AMP + diphosphate. Functionally, catalyzes the attachment of glutamate to tRNA(Glu) in a two-step reaction: glutamate is first activated by ATP to form Glu-AMP and then transferred to the acceptor end of tRNA(Glu). This Staphylococcus aureus (strain MRSA252) protein is Glutamate--tRNA ligase.